Reading from the N-terminus, the 406-residue chain is Cysteine desulfurase (406 aa).

Lys226 is modified (N6-(pyridoxal phosphate)lysine). The active-site Cysteine persulfide intermediate is the Cys364.

It belongs to the class-V pyridoxal-phosphate-dependent aminotransferase family. Csd subfamily. As to quaternary structure, homodimer. Interacts with SufE and the SufBCD complex composed of SufB, SufC and SufD. The interaction with SufE is required to mediate the direct transfer of the sulfur atom from the S-sulfanylcysteine. The cofactor is pyridoxal 5'-phosphate.

It is found in the cytoplasm. The enzyme catalyses (sulfur carrier)-H + L-cysteine = (sulfur carrier)-SH + L-alanine. The catalysed reaction is L-selenocysteine + AH2 = hydrogenselenide + L-alanine + A + H(+). The protein operates within cofactor biosynthesis; iron-sulfur cluster biosynthesis. Cysteine desulfurases mobilize the sulfur from L-cysteine to yield L-alanine, an essential step in sulfur metabolism for biosynthesis of a variety of sulfur-containing biomolecules. Component of the suf operon, which is activated and required under specific conditions such as oxidative stress and iron limitation. Acts as a potent selenocysteine lyase in vitro, that mobilizes selenium from L-selenocysteine. Selenocysteine lyase activity is however unsure in vivo. In Salmonella heidelberg (strain SL476), this protein is Cysteine desulfurase.